The primary structure comprises 276 residues: Type II pantothenate kinase (276 aa).

8-15 (DAGGTLTK) provides a ligand contact to ATP. Glu76 serves as the catalytic Proton acceptor. ATP-binding positions include Thr105, 127-131 (GGTIM), Phe143, and Ser230.

Belongs to the type II pantothenate kinase family. As to quaternary structure, homodimer.

It is found in the cytoplasm. The catalysed reaction is (R)-pantothenate + ATP = (R)-4'-phosphopantothenate + ADP + H(+). Its pathway is cofactor biosynthesis; coenzyme A biosynthesis; CoA from (R)-pantothenate: step 1/5. Catalyzes the phosphorylation of pantothenate (Pan), the first step in CoA biosynthesis. In Bacillus thuringiensis subsp. konkukian (strain 97-27), this protein is Type II pantothenate kinase.